The primary structure comprises 65 residues: Large ribosomal subunit protein bL35 (65 aa).

The segment at 1 to 22 is disordered; the sequence is MPKIKTVRGAAKRFKKTGKGGF. Residues 10–22 are compositionally biased toward basic residues; it reads AAKRFKKTGKGGF.

It belongs to the bacterial ribosomal protein bL35 family.

This is Large ribosomal subunit protein bL35 from Klebsiella pneumoniae (strain 342).